We begin with the raw amino-acid sequence, 264 residues long: Small ribosomal subunit protein eS1B (264 aa).

The span at 1 to 19 (MALGKNKRISKGGKRGKRG) shows a compositional bias: basic residues. The disordered stretch occupies residues 1–23 (MALGKNKRISKGGKRGKRGKAQE).

The protein belongs to the eukaryotic ribosomal protein eS1 family. In terms of assembly, component of the small ribosomal subunit. Mature ribosomes consist of a small (40S) and a large (60S) subunit. The 40S subunit contains about 33 different proteins and 1 molecule of RNA (18S). The 60S subunit contains about 49 different proteins and 3 molecules of RNA (25S, 5.8S and 5S).

It localises to the cytoplasm. In Leishmania infantum, this protein is Small ribosomal subunit protein eS1B.